The sequence spans 543 residues: Chaperonin GroEL 2 (543 aa).

Residues T29–P32, D86–T90, G413, D477–A479, and D493 each bind ATP. Residues P523–F543 are disordered. Basic residues predominate over residues G534 to F543.

Belongs to the chaperonin (HSP60) family. Forms a cylinder of 14 subunits composed of two heptameric rings stacked back-to-back. Interacts with the co-chaperonin GroES.

The protein localises to the cytoplasm. It catalyses the reaction ATP + H2O + a folded polypeptide = ADP + phosphate + an unfolded polypeptide.. In terms of biological role, together with its co-chaperonin GroES, plays an essential role in assisting protein folding. The GroEL-GroES system forms a nano-cage that allows encapsulation of the non-native substrate proteins and provides a physical environment optimized to promote and accelerate protein folding. In Salinispora tropica (strain ATCC BAA-916 / DSM 44818 / JCM 13857 / NBRC 105044 / CNB-440), this protein is Chaperonin GroEL 2.